A 413-amino-acid polypeptide reads, in one-letter code: Multidrug resistance protein MdtA (413 aa).

The N-terminal stretch at 1–32 (MNAKRIRGLLIFAAVIAIAVLIWRHFTQTSPA) is a signal peptide. Polar residues predominate over residues 32-46 (AAPGTSEQHAARTSH). Residues 32–59 (AAPGTSEQHAARTSHSGNNSSGNGGGRR) are disordered.

This sequence belongs to the membrane fusion protein (MFP) (TC 8.A.1) family. In terms of assembly, part of a tripartite efflux system composed of MdtA, MdtB and MdtC.

The protein localises to the cell inner membrane. This Pectobacterium carotovorum subsp. carotovorum (strain PC1) protein is Multidrug resistance protein MdtA.